The sequence spans 267 residues: MKLQKLKLHGFNNLTKSLSFCIYDICYANTEAERDGYIAYIDEQYNANRLTEILSETCSIIGANVLNIARQDYEPQGASVTILVSEEPIDPRDIDTSEHPGPLPNSVVAHLDKSHICVHTYPESHPEGGLCTFRADIEVSTCGVISPLKALNYLIHQLESDIVTIDYRVRGFTRDVNGVKHFIDHEINSIQNFMSEDMKSMYDMMDVNVYQENMFHTKMLLKEFDLKHYLFNTKPEDLSAQEHKRITDLLWKEMREIYYGRNIPAIG.

S114 functions as the Schiff-base intermediate with substrate; via pyruvic acid in the catalytic mechanism. S114 is subject to Pyruvic acid (Ser); by autocatalysis. The Proton acceptor; for processing activity role is filled by H119. The active-site Proton donor; for catalytic activity is the C142.

Belongs to the prokaryotic AdoMetDC family. Type 2 subfamily. In terms of assembly, heterooctamer of four alpha and four beta chains arranged as a tetramer of alpha/beta heterodimers. The cofactor is pyruvate. Is synthesized initially as an inactive proenzyme. Formation of the active enzyme involves a self-maturation process in which the active site pyruvoyl group is generated from an internal serine residue via an autocatalytic post-translational modification. Two non-identical subunits are generated from the proenzyme in this reaction, and the pyruvate is formed at the N-terminus of the alpha chain, which is derived from the carboxyl end of the proenzyme. The post-translation cleavage follows an unusual pathway, termed non-hydrolytic serinolysis, in which the side chain hydroxyl group of the serine supplies its oxygen atom to form the C-terminus of the beta chain, while the remainder of the serine residue undergoes an oxidative deamination to produce ammonia and the pyruvoyl group blocking the N-terminus of the alpha chain.

It carries out the reaction S-adenosyl-L-methionine + H(+) = S-adenosyl 3-(methylsulfanyl)propylamine + CO2. It functions in the pathway amine and polyamine biosynthesis; S-adenosylmethioninamine biosynthesis; S-adenosylmethioninamine from S-adenosyl-L-methionine: step 1/1. Functionally, catalyzes the decarboxylation of S-adenosylmethionine to S-adenosylmethioninamine (dcAdoMet), the propylamine donor required for the synthesis of the polyamines spermine and spermidine from the diamine putrescine. The polypeptide is S-adenosylmethionine decarboxylase proenzyme (Erwinia tasmaniensis (strain DSM 17950 / CFBP 7177 / CIP 109463 / NCPPB 4357 / Et1/99)).